Here is a 447-residue protein sequence, read N- to C-terminus: Phosphoglucosamine mutase (447 aa).

S108 serves as the catalytic Phosphoserine intermediate. 4 residues coordinate Mg(2+): S108, D247, D249, and D251. At S108 the chain carries Phosphoserine.

It belongs to the phosphohexose mutase family. Mg(2+) is required as a cofactor. In terms of processing, activated by phosphorylation.

The catalysed reaction is alpha-D-glucosamine 1-phosphate = D-glucosamine 6-phosphate. In terms of biological role, catalyzes the conversion of glucosamine-6-phosphate to glucosamine-1-phosphate. This Bordetella avium (strain 197N) protein is Phosphoglucosamine mutase.